A 324-amino-acid polypeptide reads, in one-letter code: Beta-ketoacyl-[acyl-carrier-protein] synthase III (324 aa).

Catalysis depends on residues cysteine 114 and histidine 251. Positions 252–256 (QANQR) are ACP-binding. Asparagine 281 is a catalytic residue.

It belongs to the thiolase-like superfamily. FabH family. Homodimer.

The protein localises to the cytoplasm. The catalysed reaction is malonyl-[ACP] + acetyl-CoA + H(+) = 3-oxobutanoyl-[ACP] + CO2 + CoA. The protein operates within lipid metabolism; fatty acid biosynthesis. Its function is as follows. Catalyzes the condensation reaction of fatty acid synthesis by the addition to an acyl acceptor of two carbons from malonyl-ACP. Catalyzes the first condensation reaction which initiates fatty acid synthesis and may therefore play a role in governing the total rate of fatty acid production. Possesses both acetoacetyl-ACP synthase and acetyl transacylase activities. Its substrate specificity determines the biosynthesis of branched-chain and/or straight-chain of fatty acids. In Rhodospirillum rubrum (strain ATCC 11170 / ATH 1.1.1 / DSM 467 / LMG 4362 / NCIMB 8255 / S1), this protein is Beta-ketoacyl-[acyl-carrier-protein] synthase III.